Here is a 124-residue protein sequence, read N- to C-terminus: MATKEQNLKRLDELALILGREPDISGSAAEIAQRVAEWEEEMQSSGDDVQVMNMDIRERETAAHDVREETSGALTRIRVLTCLHLCGVDGETGESVELADVGRVILIMSSDAKTHVDGGMAVYA.

It to phage lambda packaging protein FI.

This is an uncharacterized protein from Enterobacteria phage P21 (Bacteriophage 21).